Here is a 228-residue protein sequence, read N- to C-terminus: Large ribosomal subunit protein bL25 (228 aa).

The segment at 1–24 is disordered; it reads MATVMELKATARPKSGKGAARAER.

The protein belongs to the bacterial ribosomal protein bL25 family. CTC subfamily. Part of the 50S ribosomal subunit; part of the 5S rRNA/L5/L18/L25 subcomplex. Contacts the 5S rRNA. Binds to the 5S rRNA independently of L5 and L18.

Functionally, this is one of the proteins that binds to the 5S RNA in the ribosome where it forms part of the central protuberance. This is Large ribosomal subunit protein bL25 from Nitrobacter winogradskyi (strain ATCC 25391 / DSM 10237 / CIP 104748 / NCIMB 11846 / Nb-255).